We begin with the raw amino-acid sequence, 278 residues long: Neuronal membrane glycoprotein M6-a (278 aa).

Met-1 bears the N-acetylmethionine mark. The Cytoplasmic segment spans residues Met-1–Leu-22. The chain crosses the membrane as a helical span at residues Gly-23–Phe-43. Topologically, residues Cys-44–Val-84 are extracellular. The helical transmembrane segment at Ile-85 to Phe-105 threads the bilayer. Over Thr-106–Ser-127 the chain is Cytoplasmic. Residues Ala-128 to Thr-148 form a helical membrane-spanning segment. The Extracellular portion of the chain corresponds to Ser-149–Leu-213. Asn-164 is a glycosylation site (N-linked (GlcNAc...) asparagine). Cys-174 and Cys-192 are joined by a disulfide. Asn-208 carries N-linked (GlcNAc...) asparagine glycosylation. Residues Phe-214–Val-234 form a helical membrane-spanning segment. The Cytoplasmic portion of the chain corresponds to Leu-235–Thr-278. Ser-256 is subject to Phosphoserine. Thr-278 carries the phosphothreonine modification.

Belongs to the myelin proteolipid protein family. As to quaternary structure, interacts with OPRM1. Interacts with palmitoyltransferase ZDHHC17/HIP14; the interaction leads to palmitoylation of GPM6A. Post-translationally, N-glycosylated. In terms of processing, palmitoylated by ZDHHC17/HIP14. In terms of tissue distribution, widely expressed in the CNS. Found especially in the granule cell layer of the cerebellum but not in the molecular layer or white matter. Expressed in the immature embryonic retina including the nerve fiber layer (NFL), inner plexiform layer (IPL), and outer plexiform layer (OPL). Weakly expressed in processes of Mueller glia cells.

It localises to the cell membrane. Its subcellular location is the cell projection. The protein resides in the axon. The protein localises to the growth cone. It is found in the dendritic spine. It localises to the filopodium. Its subcellular location is the neuron projection. Functionally, involved in neuronal differentiation, including differentiation and migration of neuronal stem cells. Plays a role in neuronal plasticity and is involved in neurite and filopodia outgrowth, filopodia motility and probably synapse formation. Gpm6a-induced filopodia formation involves mitogen-activated protein kinase (MAPK) and Src signaling pathways. Conflictingly, PubMed:22162747 reports that induced cellular protrusions are simple membrane-wrapped tubules without actin or tubulin-based cytoskeletons and with Gpm6a gliding along membrane edges indicative for a function in actin-independent membrane deformation. May be involved in neuronal NGF-dependent Ca(2+) influx. May be involved in regulation of endocytosis and intracellular trafficking of G-protein-coupled receptors (GPCRs); enhances internalization and recycling of mu-type opioid receptor. The polypeptide is Neuronal membrane glycoprotein M6-a (Gpm6a) (Mus musculus (Mouse)).